We begin with the raw amino-acid sequence, 292 residues long: 33 kDa chaperonin (292 aa).

Cystine bridges form between Cys-236-Cys-238 and Cys-269-Cys-272.

The protein belongs to the HSP33 family. Post-translationally, under oxidizing conditions two disulfide bonds are formed involving the reactive cysteines. Under reducing conditions zinc is bound to the reactive cysteines and the protein is inactive.

It is found in the cytoplasm. Its function is as follows. Redox regulated molecular chaperone. Protects both thermally unfolding and oxidatively damaged proteins from irreversible aggregation. Plays an important role in the bacterial defense system toward oxidative stress. The chain is 33 kDa chaperonin from Ruminiclostridium cellulolyticum (strain ATCC 35319 / DSM 5812 / JCM 6584 / H10) (Clostridium cellulolyticum).